We begin with the raw amino-acid sequence, 449 residues long: SWI/SNF chromatin-remodeling accessory subunit 2 (449 aa).

The span at 1–11 shows a compositional bias: polar residues; that stretch reads MHSQQRPNPQM. Residues 1–56 form a disordered region; the sequence is MHSQQRPNPQMNRHPYGTPGSAPQMRRPGGFAGQPPQMHGPRMVAPPAAPLPKKKK. One can recognise an SWIB/MDM2 domain in the interval 223-300; the sequence is NHPAKFKLHP…PNKLHQLLQQ (78 aa).

This sequence belongs to the SMARCD family. In terms of assembly, component of the multiprotein chromatin-remodeling complexes SWI/SNF: SWI/SNF-A (BAF), SWI/SNF-B (PBAF) and related complexes. The canonical complex contains a catalytic subunit swsn-4, core subunits swsn-1 and swsn-5, and accessory subunits swsn-3, swsn-6, phf-10, dpff-1, swsn-9 and either ham-3/swsn-2.1 or swsn-2.2.

It is found in the nucleus. The protein localises to the nucleoplasm. It localises to the chromosome. Its subcellular location is the nucleus envelope. Functionally, involved in transcriptional activation and repression of select genes by chromatin remodeling (alteration of DNA-nucleosome topology). Component of SWI/SNF chromatin remodeling complexes that carry out key enzymatic activities, changing chromatin structure by altering DNA-histone contacts within a nucleosome in an ATP-dependent manner. Probably regulates vulva development through the let-60/Ras pathway. Involved in nuclear reassembly after mitosis and recruitment of nuclear envelope protein, mel-28, to the nuclear periphery in the early embryo and in the adult germline. Involved in gonadogenesis. The sequence is that of SWI/SNF chromatin-remodeling accessory subunit 2 from Caenorhabditis elegans.